The sequence spans 102 residues: Urease subunit beta (102 aa).

This sequence belongs to the urease beta subunit family. Heterotrimer of UreA (gamma), UreB (beta) and UreC (alpha) subunits. Three heterotrimers associate to form the active enzyme.

Its subcellular location is the cytoplasm. It catalyses the reaction urea + 2 H2O + H(+) = hydrogencarbonate + 2 NH4(+). The protein operates within nitrogen metabolism; urea degradation; CO(2) and NH(3) from urea (urease route): step 1/1. This Bordetella parapertussis (strain 12822 / ATCC BAA-587 / NCTC 13253) protein is Urease subunit beta.